The following is a 237-amino-acid chain: Prospore formation at selected spindle poles protein 1 (237 aa).

The protein resides in the nucleus. Its subcellular location is the cytoplasm. It localises to the cytoskeleton. It is found in the microtubule organizing center. The protein localises to the spindle pole body. Involved in the pathway that organizes the shaping and sizing of the prospore membrane (PSM) during sporulation. Required to localize MPC54 to all four spindle pole bodies, and localize DON1 and SPO14 to four prospore membranes. This chain is Prospore formation at selected spindle poles protein 1 (PFS1), found in Saccharomyces cerevisiae (strain ATCC 204508 / S288c) (Baker's yeast).